The following is a 457-amino-acid chain: Multidrug resistance protein MdtK (457 aa).

Topologically, residues 1-15 (MQKYTSEARQLLALR) are cytoplasmic. Residues 16–36 (IPVILAQVAQTAMGFVDTVMA) form a helical membrane-spanning segment. Residues 37-52 (GGYSATDMAAVAIGTS) lie on the Extracellular side of the membrane. The chain crosses the membrane as a helical span at residues 53–73 (IWLPAILFGHGLLLALTPVIA). The Cytoplasmic segment spans residues 74–92 (QLNGSGRRERIAHQVRQGF). Residues 93–113 (WLAGFVSVLVMIVLWNAGYII) form a helical membrane-spanning segment. The Extracellular portion of the chain corresponds to 114–126 (RSMHNIDPALADK). The chain crosses the membrane as a helical span at residues 127–147 (AVGYLRALLWGAPGYLFFQVA). At 148 to 159 (RNQCEGLAKTKP) the chain is on the cytoplasmic side. Residues 160-180 (GMVMGFLGLLVNIPVNYIFIY) form a helical membrane-spanning segment. Topologically, residues 181–187 (GHFGMPE) are extracellular. A helical transmembrane segment spans residues 188–208 (LGGIGCGVATAAVYWVMFIAM). Residues 209–242 (LSYIKHARSMRDIRNEKGFGKPDSVVMKRLIQLG) lie on the Cytoplasmic side of the membrane. Residues 243 to 263 (LPIALALFFEVTLFAVVALLV) form a helical membrane-spanning segment. At 264–275 (SPLGIVDVAGHQ) the chain is on the extracellular side. The helical transmembrane segment at 276–296 (IALNFSSLMFVLPMSLAAAVT) threads the bilayer. The Cytoplasmic portion of the chain corresponds to 297 to 313 (IRVGYRLGQGSTLDAQT). A helical membrane pass occupies residues 314-334 (AARTGLGVGICMAVVTAIFTV). Residues 335-349 (TLRKHIALLYNDNPE) lie on the Extracellular side of the membrane. Residues 350-370 (VVALAAQLMLLAAVYQISDSI) traverse the membrane as a helical segment. Topologically, residues 371–386 (QVIGSGILRGYKDTRS) are cytoplasmic. Residues 387-407 (IFFITFTAYWVLGLPSGYILA) traverse the membrane as a helical segment. Over 408–417 (LTDLVVDRMG) the chain is Extracellular. The helical transmembrane segment at 418–438 (PAGFWMGFIIGLTSAAVLMML) threads the bilayer. Topologically, residues 439–457 (RMRYLQRQPSAIILQRAAR) are cytoplasmic.

Belongs to the multi antimicrobial extrusion (MATE) (TC 2.A.66.1) family. MdtK subfamily.

Its subcellular location is the cell inner membrane. Multidrug efflux pump that functions probably as a Na(+)/drug antiporter. The polypeptide is Multidrug resistance protein MdtK (mdtK) (Salmonella typhimurium (strain LT2 / SGSC1412 / ATCC 700720)).